Reading from the N-terminus, the 375-residue chain is Meiotic driver cw27 (375 aa).

Disordered stretches follow at residues 1 to 42 (MKNK…STLP) and 74 to 103 (DYDENRLLITDEGNNPPNTHRENHSSGTTD). Residues 11–29 (SMDELSTKNDNEIDLEKGP) are compositionally biased toward basic and acidic residues. Helical transmembrane passes span 108–128 (FLIKLLISFTSIILFNAPAVC), 145–165 (WTLIGFWCASSLIIFTFSWCF), 172–192 (AVKVTVIFLAQCIKVTAISLA), 208–228 (EMMIIIWILWLIICCILFGCV), 245–265 (TISAVLFLIVSSVCIPIWTLW), 272–292 (LQVLGIHGIIALLVNGLMSLF), and 336–356 (VIGFILGGIANAIGGIANAIG).

Belongs to the WTF family. Homomer. Forms protein aggregates. The two isoforms can interact with each other and with themselves. High sequence similarity is required for their interaction.

The protein resides in the spore membrane. Its subcellular location is the vacuole. It localises to the membrane. It is found in the ascus epiplasm. The protein localises to the cytoplasm. The protein resides in the endoplasmic reticulum. Promotes unequal transmission of alleles from the parental zygote to progeny spores by acting as poison/antidote system where the poison and antidote proteins are produced from the same locus; the poison component is trans-acting and targets all spores within an ascus whereas the antidote component is spore-specific, leading to poisoning of all progeny that do not inherit the allele. Functionally, localizes isoform 2 to the vacuole thereby facilitating its degradation. Its function is as follows. Forms toxic aggregates that disrupt spore maturation. The chain is Meiotic driver cw27 from Schizosaccharomyces pombe (Fission yeast).